A 284-amino-acid polypeptide reads, in one-letter code: L-ribulose-5-phosphate 3-epimerase UlaE (284 aa).

It belongs to the L-ribulose-5-phosphate 3-epimerase family.

The catalysed reaction is L-ribulose 5-phosphate = L-xylulose 5-phosphate. It participates in cofactor degradation; L-ascorbate degradation; D-xylulose 5-phosphate from L-ascorbate: step 3/4. In terms of biological role, catalyzes the isomerization of L-xylulose-5-phosphate to L-ribulose-5-phosphate. Is involved in the anaerobic L-ascorbate utilization. The chain is L-ribulose-5-phosphate 3-epimerase UlaE from Escherichia coli O8 (strain IAI1).